The sequence spans 241 residues: MPPRKKRRQAAQKPQLLFHQQPLEAPKHRCRFPQLPVVTHTRQVPSKPVDHNTITSWVSPQFDTTAESWFPGKRKHHHRDHARRSSRKSTSSRFPCLTFETPQSSASSATPGILASRDGPSQPEKDISGRPLVPMLSPQSCRELSAHTFPDFPCVFIPPDIQTPESPGQGEPIPSELRENSLPSCSLHTSTPKSPEPGPVLVTDTPEEKYGIKVTWRRRRHLFAYLRERGKLSRSQFLVKD.

The segment covering 1-10 (MPPRKKRRQA) has biased composition (basic residues). Positions 1-27 (MPPRKKRRQAAQKPQLLFHQQPLEAPK) are disordered. The short motif at 56-62 (SWVSPQF) is the RAD1-binding motif element. Disordered stretches follow at residues 68–134 (SWFP…PLVP) and 157–204 (IPPD…LVTD). Over residues 72 to 87 (GKRKHHHRDHARRSSR) the composition is skewed to basic residues. Positions 100–110 (ETPQSSASSAT) are enriched in polar residues. The D-box motif lies at 129 to 136 (GRPLVPML). The KEN box signature appears at 177 to 181 (LRENS). The segment covering 181–193 (SLPSCSLHTSTPK) has biased composition (polar residues).

In terms of assembly, interacts (when phosphorylated by PLK1) with POLQ; promoting POLQ recruitment to DNA damage sites. Interacts with RAD1; interaction is direct and promotes association with the 9-1-1 (RAD9-RAD1-HUS1) complex. Interacts with RAD18. Interacts with TOPBP1. Interacts with UBE2N. Post-translationally, phosphorylated by PLK1, promoting interaction with polymerase theta (POLQ). In terms of processing, ubiquitinated and degraded by the APC/C complex upon mitotic exit.

Its subcellular location is the nucleus. It is found in the chromosome. Involved in microhomology-mediated end-joining (MMEJ) DNA repair by promoting recruitment of polymerase theta (POLQ) to DNA damage sites during mitosis. MMEJ is an alternative non-homologous end-joining (NHEJ) machinery that takes place during mitosis to repair double-strand breaks in DNA that originate in S-phase. Accumulates in M-phase; following phosphorylation by PLK1, interacts with POLQ, enabling its recruitment to double-strand breaks for subsequent repair. Also involved in the DNA damage response (DDR) signaling in response to genotoxic stresses such as ionizing radiation (IR) during the S phase. Recruited to sites of DNA damage through interaction with the 9-1-1 cell-cycle checkpoint response complex and TOPBP1 in a ATR-dependent manner. Required for the progression of the G1 to S phase transition. Plays a role in the stimulation of CHEK1 phosphorylation. This chain is RAD9, HUS1, RAD1-interacting nuclear orphan protein 1 (RHNO1), found in Bos taurus (Bovine).